The primary structure comprises 331 residues: MASLKNKHFMIGLSLTFIVALFSFLAAKLPILDKVGALTIAILIAILYRHFRGYPEQYSSGITFSSKYLLRFAIILYGLKLNIFDIIGQGSKLLAIDVGVVIFSIVMMLFVNKLLHGDKNIALLLGVGTGVCGAAAIAAVAPIFKSREKDTAISIGIIALIGTIFSLIYTAIYAIFSMTTNVYGAWSGVSLHEIAHVVLAGGFGGSDALKIALLGKLGRVFLLIPLTIVLILIMRFRSSESSSKGRISIPYFLIGFVIMALVNTYVTIPSALLNILNTVSTICLLMAMVALGLNVAFKDLKNRALKPLMTIIITSICLSSLAFIVVHWLYS.

The next 11 helical transmembrane spans lie at 9 to 26 (FMIG…SFLA), 31 to 48 (ILDK…AILY), 69 to 88 (LLRF…DIIG), 93 to 115 (LLAI…NKLL), 122 to 144 (ALLL…APIF), 154 to 176 (SIGI…YAIF), 183 to 202 (YGAW…LAGG), 217 to 234 (LGRV…ILIM), 247 to 269 (ISIP…VTIP), 273 to 295 (LNIL…GLNV), and 308 to 330 (LMTI…HWLY).

This sequence belongs to the UPF0324 family.

It is found in the cell membrane. In Staphylococcus aureus (strain COL), this protein is UPF0324 membrane protein SACOL0411.